The sequence spans 2605 residues: Protein ABERRANT POLLEN TRANSMISSION 1 (2605 aa).

The signal sequence occupies residues 1-43 (MMLGLVQLLVGFVVAWEAVELVLRHGLLLSVFKLAILAALAAA). The segment at 137–158 (STNKKKPAPRKPISTTTAKAKG) is disordered. Residues N232, N320, N348, N516, N587, N628, N696, N779, N1171, N1318, and N1459 are each glycosylated (N-linked (GlcNAc...) asparagine). A disordered region spans residues 305–326 (SASTVAEQKDEPSVDNKSAARS). Residues 311–326 (EQKDEPSVDNKSAARS) are compositionally biased toward basic and acidic residues. The tract at residues 1761-1818 (MSKDGALSSVSSTSQPSEPQQIKSSESPPSNGSGKPDLTSSSENALKRSNNSDSEEEG) is disordered. Low complexity predominate over residues 1768 to 1781 (SSVSSTSQPSEPQQ). Residues 1782 to 1812 (IKSSESPPSNGSGKPDLTSSSENALKRSNNS) are compositionally biased toward polar residues. N-linked (GlcNAc...) asparagine glycosylation is found at N1791, N1810, N2003, N2280, and N2291. Disordered regions lie at residues 2269-2312 (VSTT…SSFD) and 2332-2361 (EGQT…REDK). Over residues 2281-2300 (TSVAETNSPNNQSSKETTFA) the composition is skewed to polar residues. Basic and acidic residues-rich tracts occupy residues 2303–2312 (PELRRTSSFD) and 2343–2361 (DAAK…REDK). N-linked (GlcNAc...) asparagine glycans are attached at residues N2468 and N2564. The tract at residues 2574-2605 (TELEVAELPPRAPGYNTDSSSDSSSAETSPKD) is disordered.

The protein belongs to the SABRE family. Mature pollen-specific.

It localises to the secreted. Its subcellular location is the golgi apparatus. In terms of biological role, may be involved in membrane trafficking. Required for tip growth in pollen tubes and root hairs. The protein is Protein ABERRANT POLLEN TRANSMISSION 1 of Zea mays (Maize).